Here is a 362-residue protein sequence, read N- to C-terminus: S-adenosylmethionine-dependent nucleotide dehydratase RSAD2 (362 aa).

The disordered stretch occupies residues 47-73 (EQPQVRGEPEDTQETQEDGNSTQPTTP). Positions 64–73 (DGNSTQPTTP) are enriched in polar residues. The 221-residue stretch at 70 to 290 (PTTPVSVNYH…LERHKEVSCL (221 aa)) folds into the Radical SAM core domain. [4Fe-4S] cluster contacts are provided by Cys-84, Cys-88, and Cys-91. Lys-198 carries the N6-acetyllysine modification. Lys-207 participates in a covalent cross-link: Glycyl lysine isopeptide (Lys-Gly) (interchain with G-Cter in ubiquitin).

Belongs to the radical SAM superfamily. RSAD2 family. As to quaternary structure, homodimer. Interacts with IRAK1 and TRAF6. Interacts with FPPS. Interacts with HADHB. Interacts (via C-terminus) with VAPA/VAP33 (via C-terminus). The cofactor is [4Fe-4S] cluster. Post-translationally, acetylated by HAT1. HAT1-mediated acetylation of Lys-198 in turn recruits UBE4A that stimulates RSAD2 polyubiquitination leading to proteasomal degradation. In terms of processing, 'Lys-6'-linked polyubiquitination at Lys-207 leads to RSAD2 protein degradation. In terms of tissue distribution, expressed at higher levels in atherosclerotic arteries than in normal arteries.

Its subcellular location is the endoplasmic reticulum membrane. It is found in the golgi apparatus. It localises to the endoplasmic reticulum. The protein resides in the lipid droplet. The protein localises to the mitochondrion. Its subcellular location is the mitochondrion inner membrane. It is found in the mitochondrion outer membrane. The catalysed reaction is CTP + AH2 + S-adenosyl-L-methionine = 3'-deoxy-3',4'-didehydro-CTP + 5'-deoxyadenosine + L-methionine + A + H2O + H(+). Its activity is regulated as follows. IRAK1 and TRAF6 synergistically activate RSAD2 increasing its activity with CTP as substrate about 10-fold. Its function is as follows. Interferon-inducible antiviral protein which plays a major role in the cell antiviral state induced by type I and type II interferon. Catalyzes the conversion of cytidine triphosphate (CTP) to 3'-deoxy-3',4'-didehydro-CTP (ddhCTP) via a SAM-dependent radical mechanism. In turn, ddhCTP acts as a chain terminator for the RNA-dependent RNA polymerases from multiple viruses and directly inhibits viral replication. Therefore, inhibits a wide range of DNA and RNA viruses. Also promotes TLR7 and TLR9-dependent production of IFN-beta production in plasmacytoid dendritic cells (pDCs) by facilitating 'Lys-63'-linked ubiquitination of IRAK1 by TRAF6. Plays a role in CD4+ T-cells activation and differentiation. Facilitates T-cell receptor (TCR)-mediated GATA3 activation and optimal T-helper 2 (Th2) cytokine production by modulating NFKB1 and JUNB activities. Can inhibit secretion of soluble proteins. This Mus musculus (Mouse) protein is S-adenosylmethionine-dependent nucleotide dehydratase RSAD2.